A 206-amino-acid chain; its full sequence is FMN-dependent NADH:quinone oxidoreductase 1 (206 aa).

Residues Ser-9, Ser-15–Ser-17, and Ser-139–Gly-142 each bind FMN.

It belongs to the azoreductase type 1 family. As to quaternary structure, homodimer. FMN serves as cofactor.

The enzyme catalyses 2 a quinone + NADH + H(+) = 2 a 1,4-benzosemiquinone + NAD(+). It carries out the reaction N,N-dimethyl-1,4-phenylenediamine + anthranilate + 2 NAD(+) = 2-(4-dimethylaminophenyl)diazenylbenzoate + 2 NADH + 2 H(+). Its function is as follows. Quinone reductase that provides resistance to thiol-specific stress caused by electrophilic quinones. Functionally, also exhibits azoreductase activity. Catalyzes the reductive cleavage of the azo bond in aromatic azo compounds to the corresponding amines. This Cupriavidus pinatubonensis (strain JMP 134 / LMG 1197) (Cupriavidus necator (strain JMP 134)) protein is FMN-dependent NADH:quinone oxidoreductase 1.